The following is a 213-amino-acid chain: MTKGILGRKIGMTQIFAENGDLIPVTVIHATPNVVLQKKTIENDGYEAIQLGFEDISEKRANKPQIGHAAKANTAPKRFIREIRGANINEYEVGQEVKVDIFSEGDIVDVTGISKGKGFQGAIKRHGQSRGPMAHGSRYHRRPGSMGAIAPNRVFKTKNLPGRMGGERVTIQNLKIVKVDPERNLLLIKGNVPGPRKGLVIVKSAVKAKAKAK.

The tract at residues 122 to 147 (AIKRHGQSRGPMAHGSRYHRRPGSMG) is disordered.

It belongs to the universal ribosomal protein uL3 family. As to quaternary structure, part of the 50S ribosomal subunit. Forms a cluster with proteins L14 and L19.

Its function is as follows. One of the primary rRNA binding proteins, it binds directly near the 3'-end of the 23S rRNA, where it nucleates assembly of the 50S subunit. In Geobacillus stearothermophilus (Bacillus stearothermophilus), this protein is Large ribosomal subunit protein uL3.